The following is a 592-amino-acid chain: Leucine-rich repeat and immunoglobulin-like domain-containing nogo receptor-interacting protein 3 (592 aa).

A signal peptide spans 1–24 (MTCWLCVLSLPLLLLPAAPPPAGG). The 30-residue stretch at 25–54 (CPARCECTVQTRAVACTRRRLTAVPDGIPA) folds into the LRRNT domain. The Extracellular portion of the chain corresponds to 25–531 (CPARCECTVQ…LDLTTILVST (507 aa)). 11 LRR repeats span residues 55–76 (ETRL…DLAA), 79–100 (ALEE…AFAN), 103–124 (RLRV…VFTR), 127–148 (NLTL…TFQD), 151–172 (SLRR…AFAG), 175–196 (ALEE…SLGH), 207–228 (HLAI…LHLE), 247–268 (NLTS…ALRH), 271–292 (HLTC…SFRD), 295–316 (RLRE…AFLG), and 319–340 (QIRL…TFHS). The N-linked (GlcNAc...) asparagine glycan is linked to Asn-127. N-linked (GlcNAc...) asparagine glycosylation is present at Asn-185. Residues Asn-247, Asn-257, and Asn-276 are each glycosylated (N-linked (GlcNAc...) asparagine). A glycan (N-linked (GlcNAc...) asparagine) is linked at Asn-324. The 55-residue stretch at 352 to 406 (NPLACDCRLLWIVQRRKTLNFDGRLPACATPAEVRGDALRNLPDSVLFEYFVCRK) folds into the LRRCT domain. Residues 407-496 (PKIRERRLQR…GNDTYFATLT (90 aa)) form the Ig-like C2-type domain. Cys-429 and Cys-480 are joined by a disulfide. Asn-488 and Asn-512 each carry an N-linked (GlcNAc...) asparagine glycan. Residues 532–552 (AMGCITFLGVVLFCFVLLFVW) form a helical membrane-spanning segment. The Cytoplasmic portion of the chain corresponds to 553 to 592 (SRGRGQHKNNFSVEYSFRKVDGPAAAAGQGGARKFNMKMI).

It is found in the membrane. The protein is Leucine-rich repeat and immunoglobulin-like domain-containing nogo receptor-interacting protein 3 (LINGO3) of Homo sapiens (Human).